We begin with the raw amino-acid sequence, 397 residues long: Pectate lyase 4 (397 aa).

The N-terminal stretch at 1-25 is a signal peptide; that stretch reads MGIKHCCYILYFTLALVTLVQAGRL. A glycan (N-linked (GlcNAc...) asparagine) is linked at Asn36. Cys54 and Cys71 are oxidised to a cystine. PbH1 repeat units follow at residues 159–202, 203–224, and 227–248; these read VKNV…HVTG, SSDI…VDVN, and STGV…LLGA. Residues Asp194, Asp218, and Asp222 each coordinate Ca(2+). Arg274 is an active-site residue.

The protein belongs to the polysaccharide lyase 1 family. Amb a subfamily. In terms of assembly, monomer. Requires Ca(2+) as cofactor. Post-translationally, the N-terminus is blocked. As to expression, pollen and flowers.

It catalyses the reaction Eliminative cleavage of (1-&gt;4)-alpha-D-galacturonan to give oligosaccharides with 4-deoxy-alpha-D-galact-4-enuronosyl groups at their non-reducing ends.. It functions in the pathway glycan metabolism; pectin degradation; 2-dehydro-3-deoxy-D-gluconate from pectin: step 2/5. Has pectate lyase activity. This chain is Pectate lyase 4, found in Ambrosia artemisiifolia (Common ragweed).